Consider the following 116-residue polypeptide: Small ribosomal subunit protein bS18c (116 aa).

Positions 1 to 13 (MKPSFRNTSPSFR) are enriched in polar residues. Positions 1–51 (MKPSFRNTSPSFRNRSKPYFRNRSKPYFRNRSKPSFRNTSKRFSPNQQSFR) are disordered. Residues 14 to 34 (NRSKPYFRNRSKPYFRNRSKP) are compositionally biased toward basic residues. Over residues 35–49 (SFRNTSKRFSPNQQS) the composition is skewed to polar residues.

It belongs to the bacterial ribosomal protein bS18 family. In terms of assembly, part of the 30S ribosomal subunit.

The protein resides in the plastid. It is found in the chloroplast. The sequence is that of Small ribosomal subunit protein bS18c from Cryptomeria japonica (Japanese cedar).